The following is a 924-amino-acid chain: Type II inositol 3,4-bisphosphate 4-phosphatase (924 aa).

Residues 1–13 (MEIKEEGASEEGQ) show a composition bias toward basic and acidic residues. Disordered regions lie at residues 1–25 (MEIK…SDPG), 481–516 (ILKK…HSDY), and 546–569 (DGGS…DAIP). A C2 domain is found at 23-165 (DPGDCQFTSI…LKSKEQLLVL (143 aa)).

The protein belongs to the inositol 3,4-bisphosphate 4-phosphatase family.

It carries out the reaction a 1,2-diacyl-sn-glycero-3-phospho-(1D-myo-inositol-3,4-bisphosphate) + H2O = a 1,2-diacyl-sn-glycero-3-phospho-(1D-myo-inositol-3-phosphate) + phosphate. The enzyme catalyses 1D-myo-inositol 1,3,4-trisphosphate + H2O = 1D-myo-inositol 1,3-bisphosphate + phosphate. The catalysed reaction is 1D-myo-inositol 3,4-bisphosphate + H2O = 1D-myo-inositol 3-phosphate + phosphate. It functions in the pathway signal transduction; phosphatidylinositol signaling pathway. Its activity is regulated as follows. Strongly inhibited by inositol hexakisphosphate. Functionally, catalyzes the hydrolysis of the 4-position phosphate of phosphatidylinositol 3,4-bisphosphate, inositol 1,3,4-trisphosphate and inositol 3,4-bisphosphate. Plays a role in the late stages of macropinocytosis by dephosphorylating phosphatidylinositol 3,4-bisphosphate in membrane ruffles. Antagonizes the PI3K-AKT/PKB signaling pathway by dephosphorylating phosphoinositides and thereby modulating cell cycle progression and cell survival. This chain is Type II inositol 3,4-bisphosphate 4-phosphatase (INPP4B), found in Pongo abelii (Sumatran orangutan).